We begin with the raw amino-acid sequence, 188 residues long: Accessory gene regulator protein B (188 aa).

The next 4 helical transmembrane spans lie at 49–69 (LALL…FLTL), 104–126 (ISFQ…YAPA), 143–163 (IKSI…PPPY), and 166–186 (FVVY…SIKE).

Belongs to the AgrB family.

Its subcellular location is the cell membrane. Essential for the production of a quorum sensing system signal molecule, the autoinducing peptide (AIP). This quorum sensing system is responsible for the regulation of the expression of virulence factor genes. Involved in the proteolytic processing of AgrD, the precursor of AIP. This is Accessory gene regulator protein B from Staphylococcus intermedius.